A 48-amino-acid polypeptide reads, in one-letter code: uncharacterized protein (48 aa).

Residues isoleucine 20–histidine 37 form a helical membrane-spanning segment.

It localises to the membrane. This is an uncharacterized protein from Saccharomyces cerevisiae (strain ATCC 204508 / S288c) (Baker's yeast).